Here is a 918-residue protein sequence, read N- to C-terminus: Protein translocase subunit SecA (918 aa).

ATP is bound by residues Q87, 105–109 (GEGKT), and D516. Zn(2+) contacts are provided by C902, C904, C913, and H914.

Belongs to the SecA family. Monomer and homodimer. Part of the essential Sec protein translocation apparatus which comprises SecA, SecYEG and auxiliary proteins SecDF-YajC and YidC. Zn(2+) serves as cofactor.

The protein localises to the cell inner membrane. It is found in the cytoplasm. The catalysed reaction is ATP + H2O + cellular proteinSide 1 = ADP + phosphate + cellular proteinSide 2.. Part of the Sec protein translocase complex. Interacts with the SecYEG preprotein conducting channel. Has a central role in coupling the hydrolysis of ATP to the transfer of proteins into and across the cell membrane, serving both as a receptor for the preprotein-SecB complex and as an ATP-driven molecular motor driving the stepwise translocation of polypeptide chains across the membrane. This Methylibium petroleiphilum (strain ATCC BAA-1232 / LMG 22953 / PM1) protein is Protein translocase subunit SecA.